We begin with the raw amino-acid sequence, 232 residues long: Small ribosomal subunit protein uS3 (232 aa).

A KH type-2 domain is found at I39–K107. Residues Q213–E232 form a disordered region. The segment covering G222–E232 has biased composition (basic residues).

This sequence belongs to the universal ribosomal protein uS3 family. As to quaternary structure, part of the 30S ribosomal subunit. Forms a tight complex with proteins S10 and S14.

Functionally, binds the lower part of the 30S subunit head. Binds mRNA in the 70S ribosome, positioning it for translation. The chain is Small ribosomal subunit protein uS3 from Sulfurovum sp. (strain NBC37-1).